Here is a 769-residue protein sequence, read N- to C-terminus: Serine protease HtrA-like (769 aa).

Residues 1 to 20 (MDIGKKHVIPKSQYRRKRRE) show a composition bias toward basic residues. The disordered stretch occupies residues 1–390 (MDIGKKHVIP…ATSKLNKGRA (390 aa)). 2 stretches are compositionally biased toward basic and acidic residues: residues 21 to 64 (FFHN…ERFK) and 71 to 108 (LEQRNRDVNENKAEESKSNQDSKSAYNRDHYLTDDVSK). Polar residues predominate over residues 126-137 (YEQNSEATLSTK). Basic and acidic residues predominate over residues 138–186 (STDKVESSDMRKLSPDKNKVGHEEQHVLSKPSEHDKETRIDFESSRTDS). Polar residues-rich tracts occupy residues 202–221 (GNESSNLKSEVISDKSNTVP) and 247–262 (QQSQNEQTKTYTYGDS). Basic and acidic residues predominate over residues 264–295 (QNDKSNHENDLSHHTPSKSDDKDNVMREDHIV). Over residues 298-308 (NPDNDINTPSL) the composition is skewed to polar residues. The span at 310-330 (KIDDDRKLDEKIHVEDKHKQN) shows a compositional bias: basic and acidic residues. Positions 331-347 (ADSSETVGYQSQSSVSH) are enriched in polar residues. Positions 348 to 362 (RSTEKRNMAINDHHK) are enriched in basic and acidic residues. Residues 366-390 (QKLNTKTSANNNQKKATSKLNKGRA) are compositionally biased toward polar residues. The helical transmembrane segment at 410–430 (LVILMGIIILIVILNAIFNNV) threads the bilayer. Residues His504, Asp534, and Ser619 each act as charge relay system in the active site. The PDZ domain occupies 680-733 (IASLNSFERQAVKLPGKVKNGVVVDQVDNNGLADQSSLKKGDVITELDGKLLED).

The protein belongs to the peptidase S1C family.

The protein localises to the cell membrane. This is Serine protease HtrA-like from Staphylococcus aureus (strain bovine RF122 / ET3-1).